Reading from the N-terminus, the 560-residue chain is DNA ligase B (560 aa).

The active-site N6-AMP-lysine intermediate is K124.

Belongs to the NAD-dependent DNA ligase family. LigB subfamily.

It catalyses the reaction NAD(+) + (deoxyribonucleotide)n-3'-hydroxyl + 5'-phospho-(deoxyribonucleotide)m = (deoxyribonucleotide)n+m + AMP + beta-nicotinamide D-nucleotide.. In terms of biological role, catalyzes the formation of phosphodiester linkages between 5'-phosphoryl and 3'-hydroxyl groups in double-stranded DNA using NAD as a coenzyme and as the energy source for the reaction. In Escherichia coli O81 (strain ED1a), this protein is DNA ligase B.